The following is a 95-amino-acid chain: Signal recognition particle 19 kDa protein (95 aa).

It belongs to the SRP19 family. As to quaternary structure, part of the signal recognition particle protein translocation system, which is composed of SRP and FtsY. Archaeal SRP consists of a 7S RNA molecule of 300 nucleotides and two protein subunits: SRP54 and SRP19.

The protein localises to the cytoplasm. Functionally, involved in targeting and insertion of nascent membrane proteins into the cytoplasmic membrane. Binds directly to 7S RNA and mediates binding of the 54 kDa subunit of the SRP. In Desulfurococcus amylolyticus (strain DSM 18924 / JCM 16383 / VKM B-2413 / 1221n) (Desulfurococcus kamchatkensis), this protein is Signal recognition particle 19 kDa protein.